Reading from the N-terminus, the 436-residue chain is GTPase Der (436 aa).

EngA-type G domains are found at residues P4–I167 and I175–N351. Residues G10 to S17, D57 to I61, N119 to D122, G181 to S188, D229 to M233, and N294 to D297 each bind GTP. Residues L352–K436 form the KH-like domain.

The protein belongs to the TRAFAC class TrmE-Era-EngA-EngB-Septin-like GTPase superfamily. EngA (Der) GTPase family. As to quaternary structure, associates with the 50S ribosomal subunit.

Its function is as follows. GTPase that plays an essential role in the late steps of ribosome biogenesis. The chain is GTPase Der from Lactococcus lactis subsp. lactis (strain IL1403) (Streptococcus lactis).